The sequence spans 185 residues: Elongation factor P (185 aa).

This sequence belongs to the elongation factor P family.

The protein localises to the cytoplasm. Its pathway is protein biosynthesis; polypeptide chain elongation. In terms of biological role, involved in peptide bond synthesis. Stimulates efficient translation and peptide-bond synthesis on native or reconstituted 70S ribosomes in vitro. Probably functions indirectly by altering the affinity of the ribosome for aminoacyl-tRNA, thus increasing their reactivity as acceptors for peptidyl transferase. This is Elongation factor P (efp) from Synechococcus elongatus (strain ATCC 33912 / PCC 7942 / FACHB-805) (Anacystis nidulans R2).